Consider the following 445-residue polypeptide: MLAYKISPSSISGRVSVPPSKSHTLRAIFWASVAQGTSIIHHALASPDSEAMIQACKQLGAKILKKSTHLEITGTPHLILPKNTTINAGSSGIVFRFFTALAAIFSEKITITESSQLQRRPIAPLIQALENFGATFSYEGEPYSLPFSVLGPMSSGYTEVIGEDSQYASALAIACSLAEGPFSFTILNPKERPWFALTLWWLDFLGIPYAQSEDTYSFEGKTRPQAFSYTVGGDFSSAAFLAAAALLSQSPHPTYLENLNIDDIQGDKELFFLLKKLGANITFENNTIIIFPSTFSGGNIDMDPFIDALPILAVLCCFATSSSYLYNARSAKNKESDRIIAITQELQKMGACIQPCHDGLLINPSPLYGASMHSHKDHRIAMALSIAAMHASGDSIIYDTDCVKKTFPNFIQILNSLHTNIQEHYEHISLRPADSRQDVVWQGSR.

Positions 21, 22, and 26 each coordinate 3-phosphoshikimate. Residue Lys-21 coordinates phosphoenolpyruvate. Residues Gly-92 and Arg-120 each contribute to the phosphoenolpyruvate site. Residues Ser-165, Gln-166, Asp-307, and Lys-334 each coordinate 3-phosphoshikimate. Gln-166 serves as a coordination point for phosphoenolpyruvate. Asp-307 functions as the Proton acceptor in the catalytic mechanism. Arg-338, Arg-379, and Lys-405 together coordinate phosphoenolpyruvate.

This sequence belongs to the EPSP synthase family. Monomer.

The protein resides in the cytoplasm. It catalyses the reaction 3-phosphoshikimate + phosphoenolpyruvate = 5-O-(1-carboxyvinyl)-3-phosphoshikimate + phosphate. Its pathway is metabolic intermediate biosynthesis; chorismate biosynthesis; chorismate from D-erythrose 4-phosphate and phosphoenolpyruvate: step 6/7. Functionally, catalyzes the transfer of the enolpyruvyl moiety of phosphoenolpyruvate (PEP) to the 5-hydroxyl of shikimate-3-phosphate (S3P) to produce enolpyruvyl shikimate-3-phosphate and inorganic phosphate. The sequence is that of 3-phosphoshikimate 1-carboxyvinyltransferase from Chlamydia abortus (strain DSM 27085 / S26/3) (Chlamydophila abortus).